Reading from the N-terminus, the 405-residue chain is 8-amino-7-oxononanoate synthase (405 aa).

R23 is a binding site for substrate. 114 to 115 (GY) serves as a coordination point for pyridoxal 5'-phosphate. A substrate-binding site is contributed by H139. The pyridoxal 5'-phosphate site is built by S185, H213, and T245. N6-(pyridoxal phosphate)lysine is present on K248. T366 serves as a coordination point for substrate.

The protein belongs to the class-II pyridoxal-phosphate-dependent aminotransferase family. BioF subfamily. Homodimer. The cofactor is pyridoxal 5'-phosphate.

It carries out the reaction 6-carboxyhexanoyl-[ACP] + L-alanine + H(+) = (8S)-8-amino-7-oxononanoate + holo-[ACP] + CO2. Its pathway is cofactor biosynthesis; biotin biosynthesis. In terms of biological role, catalyzes the decarboxylative condensation of pimeloyl-[acyl-carrier protein] and L-alanine to produce 8-amino-7-oxononanoate (AON), [acyl-carrier protein], and carbon dioxide. In Delftia acidovorans (strain DSM 14801 / SPH-1), this protein is 8-amino-7-oxononanoate synthase.